The sequence spans 414 residues: Probable 26S proteasome regulatory subunit 6B (414 aa).

202–209 (GPPGCGKT) contributes to the ATP binding site.

The protein belongs to the AAA ATPase family.

It is found in the cytoplasm. The protein localises to the nucleus. The 26S proteasome is involved in the ATP-dependent degradation of ubiquitinated proteins. The regulatory (or ATPase) complex confers ATP dependency and substrate specificity to the 26S complex. This is Probable 26S proteasome regulatory subunit 6B (rpt-3) from Caenorhabditis elegans.